An 87-amino-acid chain; its full sequence is MANTAQARKRARQSVERNKHNSSLRSMLRTAIKRVRQSIAAGDKAAASEVFQKATSVIDRVADKNIIHKNKAARHKSRLAAAIKALA.

The disordered stretch occupies residues 1-24; it reads MANTAQARKRARQSVERNKHNSSL.

This sequence belongs to the bacterial ribosomal protein bS20 family.

Binds directly to 16S ribosomal RNA. The polypeptide is Small ribosomal subunit protein bS20 (Bordetella petrii (strain ATCC BAA-461 / DSM 12804 / CCUG 43448)).